Consider the following 357-residue polypeptide: Phosphate acyltransferase (357 aa).

This sequence belongs to the PlsX family. As to quaternary structure, homodimer. Probably interacts with PlsY.

Its subcellular location is the cytoplasm. It carries out the reaction a fatty acyl-[ACP] + phosphate = an acyl phosphate + holo-[ACP]. Its pathway is lipid metabolism; phospholipid metabolism. Catalyzes the reversible formation of acyl-phosphate (acyl-PO(4)) from acyl-[acyl-carrier-protein] (acyl-ACP). This enzyme utilizes acyl-ACP as fatty acyl donor, but not acyl-CoA. This chain is Phosphate acyltransferase, found in Roseobacter denitrificans (strain ATCC 33942 / OCh 114) (Erythrobacter sp. (strain OCh 114)).